We begin with the raw amino-acid sequence, 268 residues long: Tetratricopeptide repeat protein 33 (268 aa).

The disordered stretch occupies residues 14 to 34 (VSKQTVQQFEQDSEQADEDEV). Over residues 24 to 34 (QDSEQADEDEV) the composition is skewed to acidic residues. TPR repeat units lie at residues 60-93 (SKRLKEEGALLAEQDRNWEALKKWDEAVQLTPED), 94-127 (AVLYEMKSQVLITLGEVFLAVQSAEMATRLRPIW), and 128-161 (WEAWQTLGRAQLSLGEVELAVRSFQVALHLHPSE). The tract at residues 249–268 (EGDDNPTSSSQSVLIKARGL) is disordered.

The polypeptide is Tetratricopeptide repeat protein 33 (ttc33) (Danio rerio (Zebrafish)).